The sequence spans 72 residues: SRY-related protein MG42 (72 aa).

Positions 1–69 (VKRPMNAFMV…KHMADYPNYK (69 aa)) form a DNA-binding region, HMG box.

It localises to the nucleus. This chain is SRY-related protein MG42, found in Tarentola mauritanica (Common wall gecko).